Reading from the N-terminus, the 316-residue chain is Pantothenate kinase (316 aa).

95-102 (GSVAVGKS) is an ATP binding site.

Belongs to the prokaryotic pantothenate kinase family.

The protein localises to the cytoplasm. It carries out the reaction (R)-pantothenate + ATP = (R)-4'-phosphopantothenate + ADP + H(+). It functions in the pathway cofactor biosynthesis; coenzyme A biosynthesis; CoA from (R)-pantothenate: step 1/5. This chain is Pantothenate kinase, found in Erwinia tasmaniensis (strain DSM 17950 / CFBP 7177 / CIP 109463 / NCPPB 4357 / Et1/99).